The sequence spans 211 residues: Protein-L-isoaspartate O-methyltransferase (211 aa).

Residue Ser-60 is part of the active site.

Belongs to the methyltransferase superfamily. L-isoaspartyl/D-aspartyl protein methyltransferase family.

The protein resides in the cytoplasm. The catalysed reaction is [protein]-L-isoaspartate + S-adenosyl-L-methionine = [protein]-L-isoaspartate alpha-methyl ester + S-adenosyl-L-homocysteine. Catalyzes the methyl esterification of L-isoaspartyl residues in peptides and proteins that result from spontaneous decomposition of normal L-aspartyl and L-asparaginyl residues. It plays a role in the repair and/or degradation of damaged proteins. The chain is Protein-L-isoaspartate O-methyltransferase from Pseudomonas syringae pv. tomato (strain ATCC BAA-871 / DC3000).